The sequence spans 252 residues: 5'-nucleotidase SurE (252 aa).

Residues aspartate 8, aspartate 9, serine 42, and asparagine 94 each contribute to the a divalent metal cation site.

The protein belongs to the SurE nucleotidase family. It depends on a divalent metal cation as a cofactor.

It is found in the cytoplasm. The enzyme catalyses a ribonucleoside 5'-phosphate + H2O = a ribonucleoside + phosphate. Nucleotidase that shows phosphatase activity on nucleoside 5'-monophosphates. In Ehrlichia ruminantium (strain Gardel), this protein is 5'-nucleotidase SurE.